A 403-amino-acid chain; its full sequence is Ubiquitin-like modifier-activating enzyme 5 (403 aa).

The ATP site is built by Gly-81, Asp-102, Lys-125, Asn-148, and Asn-182. Cys-224 and Cys-227 together coordinate Zn(2+). Cys-248 (glycyl thioester intermediate) is an active-site residue. Zn(2+)-binding residues include Cys-301 and Cys-306. The UFM1-interacting sequence (UIS) signature appears at 333–345 (VVHEDNEWGIELV). The interval 346–376 (SEVSEEELKNSSGPVPTLPEGITVAYTVPKK) is linker. Phosphoserine is present on residues Ser-357 and Ser-392. A UFC1-binding sequence (UFC) motif is present at residues 388 to 403 (DSGESLEDLMARMKNM).

This sequence belongs to the ubiquitin-activating E1 family. UBA5 subfamily. In terms of assembly, homodimer; homodimerization is required for UFM1 activation. Interacts (via UIS motif) with UFM1; binds UFM1 via a trans-binding mechanism in which UFM1 interacts with distinct sites in both subunits of the UBA5 homodimer. Interacts (via C-terminus) with UFC1. Interacts (via UIS motif) with GABARAPL2 and, with lower affinity, with GABARAP and GABARAPL1.

It localises to the cytoplasm. The protein localises to the nucleus. The protein resides in the endoplasmic reticulum membrane. It is found in the golgi apparatus. Its function is as follows. E1-like enzyme which specifically catalyzes the first step in ufmylation. Activates UFM1 by first adenylating its C-terminal glycine residue with ATP, and thereafter linking this residue to the side chain of a cysteine residue in E1, yielding a UFM1-E1 thioester and free AMP. Activates UFM1 via a trans-binding mechanism, in which UFM1 interacts with distinct sites in both subunits of the UBA5 homodimer. Trans-binding also promotes stabilization of the UBA5 homodimer, and enhances ATP-binding. Transfer of UFM1 from UBA5 to the E2-like enzyme UFC1 also takes place using a trans mechanism. Ufmylation plays a key role in various processes, such as ribosome recycling, response to DNA damage, interferon response or reticulophagy (also called ER-phagy). Ufmylation is essential for erythroid differentiation of both megakaryocytes and erythrocytes. The chain is Ubiquitin-like modifier-activating enzyme 5 from Mus musculus (Mouse).